A 360-amino-acid chain; its full sequence is Cyclin-Y-like protein 2 (360 aa).

The 83-residue stretch at 204–286 (RLTAEFAIVS…FLKLINYNIG (83 aa)) folds into the Cyclin N-terminal domain.

This sequence belongs to the cyclin family. Cyclin Y subfamily.

The polypeptide is Cyclin-Y-like protein 2 (CCNYL2) (Macaca fascicularis (Crab-eating macaque)).